The following is a 473-amino-acid chain: Proline transporter 1 (473 aa).

Over residues 1–11 (MDQHQLDEENQ) the composition is skewed to basic and acidic residues. Positions 1 to 31 (MDQHQLDEENQRAALFHSSAPSSSLGADGEE) are disordered. The next 11 helical transmembrane spans lie at 65–85 (PWYQVGFILTTGVNSAYVLGY), 88–108 (SIMVPLGWIGGTCGLILAAAI), 145–165 (LTWALQYVNLFMINTGLIILA), 188–208 (IALSGFVCALFAFGIPYLSAL), 210–230 (IWLGLSTVFSLIYIMIAFVMS), 252–272 (IFTTIGAVANLVFAYNTGMLP), 290–310 (LWFQFTVGSLPLYAVTFMGYW), 333–353 (VANLSAFLQTVIALHIFASPM), 378–398 (VGVRGGYLTVNTLVAAMLPFL), 401–421 (FMSLTGALSTFPLTFVLANHM), and 437–457 (WHWLNVVGFSCLSVAAAVAAV).

It belongs to the amino acid/polyamine transporter 2 family. Amino acid/auxin permease (AAAP) (TC 2.A.18.3) subfamily. As to expression, expressed in roots, leaf blades and sheaths, stems and young panicle.

The protein localises to the cell membrane. In terms of biological role, proline transporter that mediates proline transport across the plasma membrane when expressed in a heterologous system (Xenopus oocytes). The polypeptide is Proline transporter 1 (PROT1) (Oryza sativa subsp. japonica (Rice)).